We begin with the raw amino-acid sequence, 452 residues long: Exodeoxyribonuclease 7 large subunit (452 aa).

This sequence belongs to the XseA family. Heterooligomer composed of large and small subunits.

It is found in the cytoplasm. The catalysed reaction is Exonucleolytic cleavage in either 5'- to 3'- or 3'- to 5'-direction to yield nucleoside 5'-phosphates.. Bidirectionally degrades single-stranded DNA into large acid-insoluble oligonucleotides, which are then degraded further into small acid-soluble oligonucleotides. This chain is Exodeoxyribonuclease 7 large subunit, found in Bacillus cereus (strain B4264).